A 925-amino-acid polypeptide reads, in one-letter code: Aspulvinone E synthetase melA (925 aa).

The adenylation (A) domain stretch occupies residues 11–434; sequence ETAAARNGDG…GGRAKETIII (424 aa). A Carrier domain is found at 564–644; the sequence is SPKNDFEKGL…ELAAALDNLY (81 aa). Ser601 is modified (O-(pantetheine 4'-phosphoryl)serine). The tract at residues 663-923 is thioesterase (TE) domain; that stretch reads PLWLVHPGAG…KILRSALAER (261 aa).

Belongs to the ATP-dependent AMP-binding enzyme family.

It is found in the cytoplasm. In terms of biological role, nonribosomal peptide synthase; part of the gene cluster that mediates the biosynthesis of Asp-melanin, a pigment that confers resistance against UV light and hampers phagocytosis by soil amoeba. The nonribosomal peptide synthase melA converts 4-hydroxyphenylpyruvate (4-HPPA) to aspulvinone E. The tyrosinase tyrP then performs hydroxylations of both aromatic moieties of aspulvinone E. The product of tyrP is highly unstable, and, due to the high reactivity of methides and ortho-diquinones, the polymeric Asp-melanin forms spontaneously. The sequence is that of Aspulvinone E synthetase melA from Aspergillus terreus.